The primary structure comprises 355 residues: Probable butyrate kinase (355 aa).

Belongs to the acetokinase family.

The protein localises to the cytoplasm. The enzyme catalyses butanoate + ATP = butanoyl phosphate + ADP. In Listeria monocytogenes serotype 4a (strain HCC23), this protein is Probable butyrate kinase.